A 104-amino-acid polypeptide reads, in one-letter code: MAPAATAAAPRLLRAAMLFLLLVAAGRRAAGAPVVNELRCQCLQTLQGIHLKNIQSVKVTTPGPHCDQTEVIASLKTGQEVCLNPTAPMVKKIIDKMLNKASAN.

Positions 1 to 30 (MAPAATAAAPRLLRAAMLFLLLVAAGRRAA) are cleaved as a signal peptide. Cystine bridges form between Cys-40–Cys-66 and Cys-42–Cys-82.

The protein belongs to the intercrine alpha (chemokine CxC) family.

The protein localises to the secreted. This is Growth-regulated protein homolog alpha from Bos taurus (Bovine).